A 108-amino-acid polypeptide reads, in one-letter code: uncharacterized protein (108 aa).

This is an uncharacterized protein from Enterobacteria phage T4 (Bacteriophage T4).